Reading from the N-terminus, the 251-residue chain is Aspartate/glutamate leucyltransferase (251 aa).

This sequence belongs to the R-transferase family. Bpt subfamily.

It localises to the cytoplasm. It catalyses the reaction N-terminal L-glutamyl-[protein] + L-leucyl-tRNA(Leu) = N-terminal L-leucyl-L-glutamyl-[protein] + tRNA(Leu) + H(+). The enzyme catalyses N-terminal L-aspartyl-[protein] + L-leucyl-tRNA(Leu) = N-terminal L-leucyl-L-aspartyl-[protein] + tRNA(Leu) + H(+). In terms of biological role, functions in the N-end rule pathway of protein degradation where it conjugates Leu from its aminoacyl-tRNA to the N-termini of proteins containing an N-terminal aspartate or glutamate. The protein is Aspartate/glutamate leucyltransferase of Xanthomonas oryzae pv. oryzae (strain KACC10331 / KXO85).